Consider the following 1237-residue polypeptide: Putative structural protein VP3 (1237 aa).

Residues G963–Q1178 form the PPPDE domain. Catalysis depends on residues H1001 and C1149.

The protein resides in the virion. This Lymantria dispar cypovirus 1 (isolate Rao) (LdCPV-1) protein is Putative structural protein VP3 (S3).